The chain runs to 558 residues: Protein S10 (558 aa).

The segment at 539–558 is disordered; that stretch reads SSNTSSHEHTQKIVLNKVTR.

The chain is Protein S10 (S10) from Avena sativa (Oat).